A 224-amino-acid polypeptide reads, in one-letter code: Metalloproteinase inhibitor 4 (224 aa).

The N-terminal stretch at 1–29 is a signal peptide; that stretch reads MPQSPRPVPSWALLLRLLALLRPPGLGEA. Residue cysteine 30 coordinates Zn(2+). 2 involved in metalloproteinase-binding regions span residues 30 to 33 and 99 to 100; these read CSCA and SS. 6 disulfide bridges follow: cysteine 30-cysteine 102, cysteine 32-cysteine 131, cysteine 42-cysteine 156, cysteine 158-cysteine 205, cysteine 163-cysteine 168, and cysteine 176-cysteine 197. The region spanning 30-156 is the NTR domain; it reads CSCAPAHPQQ…SLNHHYHLNC (127 aa).

Belongs to the protease inhibitor I35 (TIMP) family.

The protein resides in the secreted. Its function is as follows. Complexes with metalloproteinases (such as collagenases) and irreversibly inactivates them by binding to their catalytic zinc cofactor. In Bos taurus (Bovine), this protein is Metalloproteinase inhibitor 4 (TIMP4).